A 312-amino-acid chain; its full sequence is Ribosomal protein uL3 glutamine methyltransferase (312 aa).

It belongs to the protein N5-glutamine methyltransferase family. PrmB subfamily.

The catalysed reaction is L-glutaminyl-[ribosomal protein uL3] + S-adenosyl-L-methionine = N(5)-methyl-L-glutaminyl-[ribosomal protein uL3] + S-adenosyl-L-homocysteine + H(+). Methylates large ribosomal subunit protein uL3 on a specific glutamine residue. This Xylella fastidiosa (strain Temecula1 / ATCC 700964) protein is Ribosomal protein uL3 glutamine methyltransferase.